Consider the following 84-residue polypeptide: Small ribosomal subunit protein uS17 (84 aa).

It belongs to the universal ribosomal protein uS17 family. Part of the 30S ribosomal subunit.

In terms of biological role, one of the primary rRNA binding proteins, it binds specifically to the 5'-end of 16S ribosomal RNA. This is Small ribosomal subunit protein uS17 from Clostridium botulinum (strain Okra / Type B1).